A 432-amino-acid polypeptide reads, in one-letter code: Trigger factor (432 aa).

In terms of domain architecture, PPIase FKBP-type spans 161-246 (EDRVTIDFTG…LKKVEERELP (86 aa)).

This sequence belongs to the FKBP-type PPIase family. Tig subfamily. In terms of assembly, homodimer and monomer. In vivo most of the ribosomes are in complex with monomeric TF. Uncomplexed TF, however, is in a monomer-dimer equilibrium with approximately two thirds of TF existing in a dimeric state.

It is found in the cytoplasm. It catalyses the reaction [protein]-peptidylproline (omega=180) = [protein]-peptidylproline (omega=0). Its function is as follows. Involved in protein export. Acts as a chaperone by maintaining the newly synthesized protein in an open conformation. Functions as a peptidyl-prolyl cis-trans isomerase. This Escherichia coli O127:H6 (strain E2348/69 / EPEC) protein is Trigger factor.